A 430-amino-acid chain; its full sequence is Adenylosuccinate synthetase (430 aa).

Residues 12-18 (GDEGKGK) and 40-42 (GHT) each bind GTP. Aspartate 13 (proton acceptor) is an active-site residue. Mg(2+) contacts are provided by aspartate 13 and glycine 40. Residues 13–16 (DEGK), 38–41 (NAGH), threonine 128, arginine 142, glutamine 223, threonine 238, and arginine 302 contribute to the IMP site. Histidine 41 functions as the Proton donor in the catalytic mechanism. Residue 298–304 (TTTGRPR) participates in substrate binding. GTP is bound by residues arginine 304, 330 to 332 (SID), and 412 to 414 (SVG).

The protein belongs to the adenylosuccinate synthetase family. Homodimer. It depends on Mg(2+) as a cofactor.

It localises to the cytoplasm. The enzyme catalyses IMP + L-aspartate + GTP = N(6)-(1,2-dicarboxyethyl)-AMP + GDP + phosphate + 2 H(+). Its pathway is purine metabolism; AMP biosynthesis via de novo pathway; AMP from IMP: step 1/2. In terms of biological role, plays an important role in the de novo pathway of purine nucleotide biosynthesis. Catalyzes the first committed step in the biosynthesis of AMP from IMP. This Streptococcus pyogenes serotype M5 (strain Manfredo) protein is Adenylosuccinate synthetase.